The following is an 892-amino-acid chain: MNHSIKKTYLVFTMLLGFILLAGCNGDNNNDNSNNDNNGVLLTSIAVTPATPSMPLGLKQQFTAMGTYSDGTSSDITNSATWSSDDSTVATINGSGLAMGVIPGSVAITASLIDSSSNEQSATTTLTITDATLTALAITPVNPSLAKGLTKQFMATGTYSDGTSPDVTTSVTWSSANTLVATVNASGLASGVAIGSSIITASLGSDETTTELNITDAILSSIALTPVEPSIAKGITQQFTAIGTYSDGISVDITASSNWSSADTLVATMNTSGAAKGVSIGSSIITADFQAQSATSLLTVTDASLTSIMLTPANPHIPKGNTLQLTATGIYSDGISVDITSSAIWSSADTLIATVNADGVVSGITSGSAIITATSAALSATTTVTVTDTTLTSIAVTPGNQTIVKGSNKQLTATGTYSDGSLANITASVTWSSADTLVATVNNSGLASGIETGSSLISASSGALSGSTNLTITGAALNSIVVSPTNLSLVKGMNKQFAATATYSDGSVADISTSVTWSSADTLVATIDVNGLANGKAAGSSLITATSGAQSNSTNLTVTDATLNSIDVTPINPSIIKNSSQNFVATGHYSDGSTTNITSTVMWSSADTLVATLNPNEQLNSGRATAIEVGSSVIQASLSGVFADTTLNVTAALPNNPLAPELGEVARFAMLASQAITTTSGSAIVDGDLGILDQARSYYAGFTPGVNAGEFDELTNGLSYAGDDSTPPYVVPVPYASMVAFINQSRTDLGIAYNFLAADPNPNAATQVCPIELGNLTLTRGVYKTAADVTLQTGTLTLDGEGDPDSVFIFTIGGNLTSGAPGGDIVLINGAQAKNIYWRTAGKTVIGTNTNFSGNVFAWSEVNVRTGANVTGRLFAVTDQVTLDANAVTKAN.

Positions 1–23 (MNHSIKKTYLVFTMLLGFILLAG) are cleaved as a signal peptide. Cysteine 24 carries N-palmitoyl cysteine lipidation. Residue cysteine 24 is the site of S-diacylglycerol cysteine attachment. BIG2 domains follow at residues 43-111 (TSIA…ITAS), 134-205 (TALA…SLGS), 221-288 (SIAL…ITAD), 306-386 (TSIM…TVTV), 392-471 (TSIA…TNLT), 478-558 (NSIV…NLTV), and 565-638 (SIDV…QASL). An Ice-binding site motif (T-A/G-X-T/N) motif is present at residues 866-869 (TGAN).

Belongs to the ice-binding protein family.

Its subcellular location is the cell outer membrane. Functionally, ice-binding adhesion protein that adsorbs this bacterium onto ice to maintain a favorable position in its aquatic habitat. Inhibits growth of the ice crystals. Has high thermal hysteresis (TH) activity, which is the ability to lower the freezing point of an aqueous solution below its melting point. The TH activity of this protein is approximately 1.4 degrees Celsius at 25 uM and little below 2 degrees Celsius at 80 uM. The polypeptide is Ice-binding protein 1 (Shewanella frigidimarina (strain NCIMB 400)).